The chain runs to 887 residues: Alpha-amylase 3, chloroplastic (887 aa).

The transit peptide at 1 to 55 (MSTVPIESLLHHSYLRHNSKVNRGNRSFIPISLNLRSHFTSNKLLHSIGKSVGVS) directs the protein to the chloroplast. An intrachain disulfide couples C499 to C587. Substrate is bound by residues 545 to 546 (YM) and 664 to 669 (RLDFVR). The active-site Nucleophile is the D666. E691 acts as the Proton donor in catalysis. Substrate-binding positions include W693, S695, Q712, K754, 760–762 (GWW), H773, Q779, K857, and W884.

The protein belongs to the glycosyl hydrolase 13 family. The cofactor is Ca(2+). In terms of tissue distribution, expressed in developing siliques.

It is found in the plastid. The protein localises to the chloroplast. The catalysed reaction is Endohydrolysis of (1-&gt;4)-alpha-D-glucosidic linkages in polysaccharides containing three or more (1-&gt;4)-alpha-linked D-glucose units.. Redox-regulated, with the highest activity under reducing conditions. The midpoint redox potential is -329 mV. The disulfide bridge between Cys-499 and Cys-587 inhibits catalysis. Inhibited by CuCl(2) and H(2)O(2). Its function is as follows. Possesses endoamylolytic activity in vitro, but seems not required for breakdown of transitory starch in leaves. May be involved in the determination of the final structure of glucans by shortening long linear phospho-oligosaccharides in the chloroplast stroma. Can act on both soluble and insoluble glucan substrates to release small linear and branched malto-oligosaccharides. Works synergistically with beta-amylase toward efficient starch degradation. Has activity against p-nitrophenyl maltoheptaoside (BPNP-G7), amylopectin and beta-limit dextrin. Involved in stress-induced starch degradation. This is Alpha-amylase 3, chloroplastic from Arabidopsis thaliana (Mouse-ear cress).